Reading from the N-terminus, the 687-residue chain is Glycine--tRNA ligase beta subunit (687 aa).

Belongs to the class-II aminoacyl-tRNA synthetase family. In terms of assembly, tetramer of two alpha and two beta subunits.

It localises to the cytoplasm. The catalysed reaction is tRNA(Gly) + glycine + ATP = glycyl-tRNA(Gly) + AMP + diphosphate. This Neisseria meningitidis serogroup A / serotype 4A (strain DSM 15465 / Z2491) protein is Glycine--tRNA ligase beta subunit.